The primary structure comprises 483 residues: O-acetyltransferase pboB (483 aa).

The protein belongs to the fumigaclavine B O-acetyltransferase family. Monomer.

It functions in the pathway secondary metabolite biosynthesis. Functionally, O-acetyltransferase; part of the gene cluster that mediates the biosynthesis of protubonine B, a hydroxylated and diacetylated cyclo-L-Trp-L-Leu derivative. Within the pathway, pboB catalyzes the acetylation of protubonine C at N-1 of the indoline ring to produce protubonine B. The first step of the protubonine B synthesis is performed by the nonribosomal peptide synthetase pboA that catalyzes the formation of cyclo-L-Trp-L-Leu by condensing L-Leu with L-Trp. The flavin-dependent monooxygenase pboD is responsible for hydroxylation at C-3 of the indole ring and subsequent formation of the pyrrolidine ring, leadind to protubonine D. Protubonine D is further diacetylated by two acetyltransferases, pboB and pboC, to form the final product protubonine B via protubonine C. This Aspergillus ustus protein is O-acetyltransferase pboB.